We begin with the raw amino-acid sequence, 282 residues long: MIPWNAYVRLLRLNKPIGILLLWYPTAWALWMANQGFPSIDLLMIFLLGTVFMRSAGCVINDIADRHIDRHVARTQFRPLTSGEVSLSEAFILLFILLCASLLLLLKLPINCFYFAVISVLITFVYPFCKRFLNAPQLILGLAFSMGIPMAFIASGKNLNSDFVVLFLINFTWIIAYDTMYAMTDKADDLKIGVKSTAIYFASYDRLIIALLLIFLHSLWLVWAINKNAEWFFYLLWCTAAGILTYQLKLIYARIPKNCFKAFLVSGYYGLVMWFAVGLALI.

Transmembrane regions (helical) follow at residues 17-37 (IGIL…NQGF), 40-60 (IDLL…GCVI), 90-110 (AFIL…KLPI), 113-133 (FYFA…KRFL), 135-155 (APQL…FIAS), 163-183 (FVVL…MYAM), 207-227 (LIIA…AINK), 231-251 (WFFY…LKLI), and 262-282 (AFLV…LALI).

Belongs to the UbiA prenyltransferase family. Mg(2+) serves as cofactor.

Its subcellular location is the cell inner membrane. It catalyses the reaction all-trans-octaprenyl diphosphate + 4-hydroxybenzoate = 4-hydroxy-3-(all-trans-octaprenyl)benzoate + diphosphate. Its pathway is cofactor biosynthesis; ubiquinone biosynthesis. In terms of biological role, catalyzes the prenylation of para-hydroxybenzoate (PHB) with an all-trans polyprenyl group. Mediates the second step in the final reaction sequence of ubiquinone-8 (UQ-8) biosynthesis, which is the condensation of the polyisoprenoid side chain with PHB, generating the first membrane-bound Q intermediate 3-octaprenyl-4-hydroxybenzoate. The chain is 4-hydroxybenzoate octaprenyltransferase from Legionella pneumophila (strain Paris).